The following is a 196-amino-acid chain: Ribosome maturation factor RimP (196 aa).

Belongs to the RimP family.

Its subcellular location is the cytoplasm. Functionally, required for maturation of 30S ribosomal subunits. In Lawsonia intracellularis (strain PHE/MN1-00), this protein is Ribosome maturation factor RimP.